A 481-amino-acid chain; its full sequence is 3-isopropylmalate dehydratase large subunit (481 aa).

[4Fe-4S] cluster contacts are provided by cysteine 357, cysteine 417, and cysteine 420.

Belongs to the aconitase/IPM isomerase family. LeuC type 1 subfamily. Heterodimer of LeuC and LeuD. [4Fe-4S] cluster serves as cofactor.

It carries out the reaction (2R,3S)-3-isopropylmalate = (2S)-2-isopropylmalate. It participates in amino-acid biosynthesis; L-leucine biosynthesis; L-leucine from 3-methyl-2-oxobutanoate: step 2/4. Catalyzes the isomerization between 2-isopropylmalate and 3-isopropylmalate, via the formation of 2-isopropylmaleate. The protein is 3-isopropylmalate dehydratase large subunit of Mycolicibacterium vanbaalenii (strain DSM 7251 / JCM 13017 / BCRC 16820 / KCTC 9966 / NRRL B-24157 / PYR-1) (Mycobacterium vanbaalenii).